Here is a 453-residue protein sequence, read N- to C-terminus: uncharacterized protein (453 aa).

This is an uncharacterized protein from Galliformes (FAdV-1).